The following is a 268-amino-acid chain: Imidazole glycerol phosphate synthase subunit HisF (268 aa).

Residues D12 and D131 contribute to the active site.

This sequence belongs to the HisA/HisF family. In terms of assembly, heterodimer of HisH and HisF.

It is found in the cytoplasm. It catalyses the reaction 5-[(5-phospho-1-deoxy-D-ribulos-1-ylimino)methylamino]-1-(5-phospho-beta-D-ribosyl)imidazole-4-carboxamide + L-glutamine = D-erythro-1-(imidazol-4-yl)glycerol 3-phosphate + 5-amino-1-(5-phospho-beta-D-ribosyl)imidazole-4-carboxamide + L-glutamate + H(+). Its pathway is amino-acid biosynthesis; L-histidine biosynthesis; L-histidine from 5-phospho-alpha-D-ribose 1-diphosphate: step 5/9. Its function is as follows. IGPS catalyzes the conversion of PRFAR and glutamine to IGP, AICAR and glutamate. The HisF subunit catalyzes the cyclization activity that produces IGP and AICAR from PRFAR using the ammonia provided by the HisH subunit. The polypeptide is Imidazole glycerol phosphate synthase subunit HisF (Methanoculleus marisnigri (strain ATCC 35101 / DSM 1498 / JR1)).